The primary structure comprises 685 residues: Translation initiation factor IF-2 (685 aa).

The tract at residues 60-79 (ISLAKTREPSKEKTEAKKPP) is disordered. Over residues 64–79 (KTREPSKEKTEAKKPP) the composition is skewed to basic and acidic residues. The region spanning 175 to 352 (NRPPVVTVMG…DIRCIPDSPV (178 aa)) is the tr-type G domain. The G1 stretch occupies residues 184–191 (GHVDHGKT). GTP is bound at residue 184 to 191 (GHVDHGKT). The interval 209–213 (GITQS) is G2. The G3 stretch occupies residues 230 to 233 (DTPG). Residues 230–234 (DTPGH) and 284–287 (NKID) contribute to the GTP site. Residues 284–287 (NKID) form a G4 region. Residues 321 to 323 (SAR) are G5.

The protein belongs to the TRAFAC class translation factor GTPase superfamily. Classic translation factor GTPase family. IF-2 subfamily.

It localises to the cytoplasm. Functionally, one of the essential components for the initiation of protein synthesis. Protects formylmethionyl-tRNA from spontaneous hydrolysis and promotes its binding to the 30S ribosomal subunits. Also involved in the hydrolysis of GTP during the formation of the 70S ribosomal complex. This chain is Translation initiation factor IF-2, found in Fervidobacterium nodosum (strain ATCC 35602 / DSM 5306 / Rt17-B1).